A 494-amino-acid chain; its full sequence is Trigger factor (494 aa).

Residues 169-254 (GDRITMDYVG…VKDVAAPGAV (86 aa)) form the PPIase FKBP-type domain. Positions 440–494 (LLAEDEGEAKAETKKAAPKKKAAAKSEAAEAGEGEEAAPKKKAAPKKKASEDSAE) are disordered.

It belongs to the FKBP-type PPIase family. Tig subfamily.

It is found in the cytoplasm. It carries out the reaction [protein]-peptidylproline (omega=180) = [protein]-peptidylproline (omega=0). Its function is as follows. Involved in protein export. Acts as a chaperone by maintaining the newly synthesized protein in an open conformation. Functions as a peptidyl-prolyl cis-trans isomerase. This Rhizobium etli (strain ATCC 51251 / DSM 11541 / JCM 21823 / NBRC 15573 / CFN 42) protein is Trigger factor.